Here is a 138-residue protein sequence, read N- to C-terminus: MSIVNSELDKSISTHIINNTNIIMAHYCNGSCAHNAYHTGYDKGMAVGMLAQQLLQSACPPVGVRTSYDLWGTVQPVRRYTCSYQCPYAGGAECSMCFARRVNPSGSPTYNPGQNSAPTILLSLAPGTSLSIGGIKYI.

This is an uncharacterized protein from Acanthamoeba polyphaga (Amoeba).